Reading from the N-terminus, the 366-residue chain is Adenine DNA glycosylase (366 aa).

Trp30–Arg31 lines the DNA pocket. Glu43 serves as the catalytic Proton donor/acceptor. Residues Gln48 to Thr49, Leu86 to Tyr88, Tyr126, and Glu188 each bind DNA. One can recognise a HhH domain in the interval Arg105 to Ser133. 4 residues coordinate [4Fe-4S] cluster: Cys198, Cys205, Cys208, and Cys214. Ser308 is a DNA binding site.

The protein belongs to the Nth/MutY family. The cofactor is [4Fe-4S] cluster.

The enzyme catalyses Hydrolyzes free adenine bases from 7,8-dihydro-8-oxoguanine:adenine mismatched double-stranded DNA, leaving an apurinic site.. In terms of biological role, base excision repair (BER) glycosylase that initiates repair of A:oxoG to C:G by removing the inappropriately paired adenine base from the DNA backbone, generating an abasic site product. 8-oxoguanine (oxoG) is a genotoxic DNA lesion resulting from oxidation of guanine; this residue is misread by replicative DNA polymerases, that insert adenine instead of cytosine opposite the oxidized damaged base. Shows a powerful dicrimination of A versus C, since it does not cleave cytosine in oxoG:C pairs. May also be able to remove adenine from A:G mispairs, although this activity may not be physiologically relevant. This is Adenine DNA glycosylase from Geobacillus stearothermophilus (Bacillus stearothermophilus).